The primary structure comprises 146 residues: Transcriptional regulator MraZ (146 aa).

SpoVT-AbrB domains are found at residues 7–54 and 83–126; these read NATN…GLDL and GVFV…QPEA.

This sequence belongs to the MraZ family. As to quaternary structure, forms oligomers.

The protein localises to the cytoplasm. It is found in the nucleoid. The sequence is that of Transcriptional regulator MraZ from Rhizobium rhizogenes (strain K84 / ATCC BAA-868) (Agrobacterium radiobacter).